Reading from the N-terminus, the 289-residue chain is Nucleotide-binding protein LAF_0356 (289 aa).

12–19 (GMSGAGKT) contacts ATP. 62 to 65 (DSRS) contacts GTP.

Belongs to the RapZ-like family.

Its function is as follows. Displays ATPase and GTPase activities. This Limosilactobacillus fermentum (strain NBRC 3956 / LMG 18251) (Lactobacillus fermentum) protein is Nucleotide-binding protein LAF_0356.